A 453-amino-acid chain; its full sequence is Bifunctional protein GlmU (453 aa).

The pyrophosphorylase stretch occupies residues 1 to 225; that stretch reads MHAHVILAAG…AEEALGVNTR (225 aa). UDP-N-acetyl-alpha-D-glucosamine is bound by residues 7–10, Lys21, Gln72, and 77–78; these read LAAG and GT. Asp102 is a binding site for Mg(2+). UDP-N-acetyl-alpha-D-glucosamine-binding residues include Gly138, Glu152, Asn167, and Asn223. Asn223 is a Mg(2+) binding site. The linker stretch occupies residues 226-246; sequence EELARVEGVLLRRLRAEWMGK. An N-acetyltransferase region spans residues 247–453; sequence GVRMILPETI…GYALRKLGEG (207 aa). Residues Arg329 and Lys347 each contribute to the UDP-N-acetyl-alpha-D-glucosamine site. Residue His359 is the Proton acceptor of the active site. Positions 362 and 373 each coordinate UDP-N-acetyl-alpha-D-glucosamine. Acetyl-CoA contacts are provided by residues Ala376, 382–383, Ser401, Ala419, and Arg436; that span reads NY.

The protein in the N-terminal section; belongs to the N-acetylglucosamine-1-phosphate uridyltransferase family. In the C-terminal section; belongs to the transferase hexapeptide repeat family. In terms of assembly, homotrimer. It depends on Mg(2+) as a cofactor.

It localises to the cytoplasm. It carries out the reaction alpha-D-glucosamine 1-phosphate + acetyl-CoA = N-acetyl-alpha-D-glucosamine 1-phosphate + CoA + H(+). The catalysed reaction is N-acetyl-alpha-D-glucosamine 1-phosphate + UTP + H(+) = UDP-N-acetyl-alpha-D-glucosamine + diphosphate. It participates in nucleotide-sugar biosynthesis; UDP-N-acetyl-alpha-D-glucosamine biosynthesis; N-acetyl-alpha-D-glucosamine 1-phosphate from alpha-D-glucosamine 6-phosphate (route II): step 2/2. It functions in the pathway nucleotide-sugar biosynthesis; UDP-N-acetyl-alpha-D-glucosamine biosynthesis; UDP-N-acetyl-alpha-D-glucosamine from N-acetyl-alpha-D-glucosamine 1-phosphate: step 1/1. The protein operates within bacterial outer membrane biogenesis; LPS lipid A biosynthesis. In terms of biological role, catalyzes the last two sequential reactions in the de novo biosynthetic pathway for UDP-N-acetylglucosamine (UDP-GlcNAc). The C-terminal domain catalyzes the transfer of acetyl group from acetyl coenzyme A to glucosamine-1-phosphate (GlcN-1-P) to produce N-acetylglucosamine-1-phosphate (GlcNAc-1-P), which is converted into UDP-GlcNAc by the transfer of uridine 5-monophosphate (from uridine 5-triphosphate), a reaction catalyzed by the N-terminal domain. This is Bifunctional protein GlmU from Thermus thermophilus (strain ATCC BAA-163 / DSM 7039 / HB27).